We begin with the raw amino-acid sequence, 170 residues long: Archaemetzincin (170 aa).

Histidine 110 contacts Zn(2+). The active-site Proton acceptor is the glutamate 111. Residues histidine 114, histidine 120, cysteine 121, cysteine 125, cysteine 144, and cysteine 147 each coordinate Zn(2+).

It belongs to the peptidase M54 family. Monomer. Zn(2+) is required as a cofactor.

Functionally, probable zinc metalloprotease whose natural substrate is unknown. The polypeptide is Archaemetzincin (Nanoarchaeum equitans (strain Kin4-M)).